The sequence spans 1083 residues: Kinesin-like protein KIN-14R (1083 aa).

Positions 264 to 418 (HDKYEKKIAE…NHIQETKGNI (155 aa)) form a coiled coil. In terms of domain architecture, Kinesin motor spans 417–739 (NIRVFCRCRP…LNFATRVRGV (323 aa)). Residue 500–507 (GQTGTGKT) coordinates ATP. Coiled-coil stretches lie at residues 746–876 (KQVD…SEGS) and 905–947 (IKEL…MATT). The segment at 967–1083 (EDNFGNENME…RDSKKKIWSR (117 aa)) is disordered. A compositionally biased stretch (polar residues) spans 971–985 (GNENMESNTNILRTS). Over residues 1020-1032 (PQMKEKRIRKSDP) the composition is skewed to basic and acidic residues. Polar residues predominate over residues 1044–1054 (RTASGSSSQVP). Positions 1062–1083 (KREQQEVPVVKERDSKKKIWSR) are enriched in basic and acidic residues.

Belongs to the TRAFAC class myosin-kinesin ATPase superfamily. Kinesin family. KIN-14 subfamily.

The sequence is that of Kinesin-like protein KIN-14R from Arabidopsis thaliana (Mouse-ear cress).